Reading from the N-terminus, the 340-residue chain is Ketol-acid reductoisomerase (NADP(+)) (340 aa).

The KARI N-terminal Rossmann domain maps to 1–182 (MRVYYDRDCD…GGGRSGIIET (182 aa)). Residues 24–27 (YGSQ), R48, S51, S53, and 83–86 (DELQ) each bind NADP(+). The active site involves H108. Residue G134 coordinates NADP(+). Positions 183–329 (NFRQECETDL…EKLRGMMPWI (147 aa)) constitute a KARI C-terminal knotted domain. Residues D191, E195, E227, and E231 each coordinate Mg(2+). Residue S252 participates in substrate binding.

This sequence belongs to the ketol-acid reductoisomerase family. Requires Mg(2+) as cofactor.

It carries out the reaction (2R)-2,3-dihydroxy-3-methylbutanoate + NADP(+) = (2S)-2-acetolactate + NADPH + H(+). The catalysed reaction is (2R,3R)-2,3-dihydroxy-3-methylpentanoate + NADP(+) = (S)-2-ethyl-2-hydroxy-3-oxobutanoate + NADPH + H(+). The protein operates within amino-acid biosynthesis; L-isoleucine biosynthesis; L-isoleucine from 2-oxobutanoate: step 2/4. It participates in amino-acid biosynthesis; L-valine biosynthesis; L-valine from pyruvate: step 2/4. Functionally, involved in the biosynthesis of branched-chain amino acids (BCAA). Catalyzes an alkyl-migration followed by a ketol-acid reduction of (S)-2-acetolactate (S2AL) to yield (R)-2,3-dihydroxy-isovalerate. In the isomerase reaction, S2AL is rearranged via a Mg-dependent methyl migration to produce 3-hydroxy-3-methyl-2-ketobutyrate (HMKB). In the reductase reaction, this 2-ketoacid undergoes a metal-dependent reduction by NADPH to yield (R)-2,3-dihydroxy-isovalerate. In Cereibacter sphaeroides (strain ATCC 17023 / DSM 158 / JCM 6121 / CCUG 31486 / LMG 2827 / NBRC 12203 / NCIMB 8253 / ATH 2.4.1.) (Rhodobacter sphaeroides), this protein is Ketol-acid reductoisomerase (NADP(+)).